The sequence spans 78 residues: Large ribosomal subunit protein bL28 (78 aa).

The disordered stretch occupies residues methionine 1 to serine 21.

The protein belongs to the bacterial ribosomal protein bL28 family.

The chain is Large ribosomal subunit protein bL28 from Synechococcus sp. (strain RCC307).